We begin with the raw amino-acid sequence, 199 residues long: Recombination protein RecR (199 aa).

The C4-type zinc finger occupies 57–72; it reads CSICGNITDEDPCAIC. Residues 80–176 enclose the Toprim domain; it reads STILVVEQPK…KVTRLAHGLS (97 aa).

It belongs to the RecR family.

Functionally, may play a role in DNA repair. It seems to be involved in an RecBC-independent recombinational process of DNA repair. It may act with RecF and RecO. The sequence is that of Recombination protein RecR from Lacticaseibacillus casei (strain BL23) (Lactobacillus casei).